Consider the following 815-residue polypeptide: Bifunctional purine biosynthetic protein purD (815 aa).

Residues 6–452 (NILVIGSGSR…YRKDIGQKAL (447 aa)) are GARS. The ATP-grasp domain maps to 113 to 343 (KDFMARNNIP…LFEIVLACIE (231 aa)). 139–200 (IESLNYKIVL…EEFLDGEECS (62 aa)) is an ATP binding site. Residues Glu-313 and Asn-315 each coordinate Mg(2+). The AIRS stretch occupies residues 469–801 (VSYSESGVDI…KVYKIGKIIN (333 aa)).

In the N-terminal section; belongs to the GARS family. It in the C-terminal section; belongs to the AIR synthase family. Mg(2+) is required as a cofactor. Requires Mn(2+) as cofactor.

The protein resides in the cytoplasm. The protein localises to the cytosol. It catalyses the reaction 5-phospho-beta-D-ribosylamine + glycine + ATP = N(1)-(5-phospho-beta-D-ribosyl)glycinamide + ADP + phosphate + H(+). It carries out the reaction 2-formamido-N(1)-(5-O-phospho-beta-D-ribosyl)acetamidine + ATP = 5-amino-1-(5-phospho-beta-D-ribosyl)imidazole + ADP + phosphate + H(+). It participates in purine metabolism; IMP biosynthesis via de novo pathway; 5-amino-1-(5-phospho-D-ribosyl)imidazole from N(2)-formyl-N(1)-(5-phospho-D-ribosyl)glycinamide: step 2/2. It functions in the pathway purine metabolism; IMP biosynthesis via de novo pathway; N(1)-(5-phospho-D-ribosyl)glycinamide from 5-phospho-alpha-D-ribose 1-diphosphate: step 2/2. Functionally, catalyzes the second and fifth step in the 'de novo' purine biosynthesis pathway; contains phosphoribosylamine--glycine ligase (GARS) and phosphoribosylformylglycinamidine cyclo-ligase (AIRS) activities. The chain is Bifunctional purine biosynthetic protein purD (purD) from Dictyostelium discoideum (Social amoeba).